The chain runs to 31 residues: Cytochrome b6-f complex subunit 6 (31 aa).

The helical transmembrane segment at 3–23 threads the bilayer; it reads IITSYFGFLLTALTIASALFI.

The protein belongs to the PetL family. As to quaternary structure, the 4 large subunits of the cytochrome b6-f complex are cytochrome b6, subunit IV (17 kDa polypeptide, PetD), cytochrome f and the Rieske protein, while the 4 small subunits are PetG, PetL, PetM and PetN. The complex functions as a dimer.

Its subcellular location is the plastid. The protein localises to the chloroplast thylakoid membrane. Component of the cytochrome b6-f complex, which mediates electron transfer between photosystem II (PSII) and photosystem I (PSI), cyclic electron flow around PSI, and state transitions. PetL is important for photoautotrophic growth as well as for electron transfer efficiency and stability of the cytochrome b6-f complex. This chain is Cytochrome b6-f complex subunit 6, found in Helianthus annuus (Common sunflower).